Here is a 404-residue protein sequence, read N- to C-terminus: Succinyl-diaminopimelate desuccinylase (404 aa).

H80 contacts Zn(2+). D82 is an active-site residue. D113 is a binding site for Zn(2+). E147 acts as the Proton acceptor in catalysis. Residues E148, E176, and H373 each contribute to the Zn(2+) site.

The protein belongs to the peptidase M20A family. DapE subfamily. Homodimer. It depends on Zn(2+) as a cofactor. Co(2+) serves as cofactor.

The enzyme catalyses N-succinyl-(2S,6S)-2,6-diaminopimelate + H2O = (2S,6S)-2,6-diaminopimelate + succinate. It functions in the pathway amino-acid biosynthesis; L-lysine biosynthesis via DAP pathway; LL-2,6-diaminopimelate from (S)-tetrahydrodipicolinate (succinylase route): step 3/3. Catalyzes the hydrolysis of N-succinyl-L,L-diaminopimelic acid (SDAP), forming succinate and LL-2,6-diaminopimelate (DAP), an intermediate involved in the bacterial biosynthesis of lysine and meso-diaminopimelic acid, an essential component of bacterial cell walls. The chain is Succinyl-diaminopimelate desuccinylase from Allorhizobium ampelinum (strain ATCC BAA-846 / DSM 112012 / S4) (Agrobacterium vitis (strain S4)).